The sequence spans 223 residues: HTH-type transcriptional dual regulator CecR (223 aa).

An HTH tetR-type domain is found at 11–70 (EQAKKQLIAAALAQFGEYGMNATTREIAAQAGQNIAAITYYFGSKEDLYLACAQWIADFI). Positions 33–52 (TTREIAAQAGQNIAAITYYF) form a DNA-binding region, H-T-H motif.

The protein localises to the cytoplasm. Its function is as follows. Regulates transcription of the cecR-ybhGFSR operon and the rhlE gene, which altogether are involved in the control of sensitivity to cefoperazone and chloramphenicol. Represses the cecR-ybhGFSR operon and activates the rhlE operon. Acts by binding to a palindromic sequence within the intergenic spacer located between these two divergently transcribed operons. In Shigella flexneri, this protein is HTH-type transcriptional dual regulator CecR.